The primary structure comprises 679 residues: G-protein-signaling modulator 2 (679 aa).

Positions 22 to 357 (ASCLELALEG…HLEISREVGD (336 aa)) are important for interaction with NUMA1; INSC and FRMPD1. 8 TPR repeats span residues 24–57 (CLEL…GTED), 62–95 (SAIY…ARTI), 102–135 (AKAS…SREL), 142–184 (ARAL…AVDL), 202–235 (GRAF…AKEF), 242–275 (RRAY…ARQL), 282–315 (AQSC…AQEL), and 322–355 (GRAC…SREV). Serine 408 and serine 484 each carry phosphoserine. Position 487 is a phosphothreonine (threonine 487). A GoLoco 1 domain is found at 490 to 512 (DEGFFDLLRRFQSNRMDDQRCHL). Serine 540 and serine 564 each carry phosphoserine. GoLoco domains lie at 543–565 (TDEF…RASF), 594–616 (DEDF…RCAP), and 628–650 (DEDF…RVLL). Arginine 608, arginine 613, arginine 642, and arginine 647 together coordinate GDP.

This sequence belongs to the GPSM family. In terms of assembly, interacts with the dynein-dynactin complex; this interaction is inhibited in a PLK1-dependent manner. Part of a spindle orientation complex at least composed of GNAI1, GPSM2 and NUMA1. Interacts with LLGL2. Interacts (via TPR repeat region) with INSC/inscuteable. Interacts (via TPR repeat region) with NUMA1 (via C-terminus); this interaction is direct, inhibited in a PLK1-dependent manner and promotes spindle pole organization. INSC and NUMA1 compete for the same binding site, but INSC has higher affinity and can displace NUMA1 (in vitro). Interacts with GNAI2. Interacts (via GoLoco domains) with the GDP-bound form of GNAI1 and GNAI3; has much lower affinity for the GTP-bound form. Interaction with GDP-bound GNAI3 strongly enhances the affinity for NUMA1. Interacts (via TPR repeat region) with FRMPD1. INSC and FRMPD1 compete for the same binding site, but INSC has higher affinity and can displace FRMPD1 (in vitro). Interacts (via TPR repeat region) with FRMPD4. Identified in a complex with INSC and F2RL2/Par3. Interacts with TASOR. As to expression, detected in brain and liver (at protein level). Detected in brain, spleen, liver and testis, and at lower levels in heart, lung and kidney. Enriched in the ventricular zone of the developing central nervous systems. Expressed in proximal colon, ileum, ovary, Sertoli cells of the testis and granular cells within the cerebellum.

The protein resides in the cytoplasm. Its subcellular location is the cell cortex. It is found in the cytoskeleton. The protein localises to the spindle pole. It localises to the lateral cell membrane. In terms of biological role, plays an important role in mitotic spindle pole organization via its interaction with NUMA1. Required for cortical dynein-dynactin complex recruitment during metaphase. Plays a role in metaphase spindle orientation. Plays an important role in asymmetric cell divisions. Has guanine nucleotide dissociation inhibitor (GDI) activity towards G(i) alpha proteins, such as GNAI1 and GNAI3, and thereby regulates their activity. The protein is G-protein-signaling modulator 2 (Gpsm2) of Mus musculus (Mouse).